Here is a 688-residue protein sequence, read N- to C-terminus: Polyphosphate kinase (688 aa).

Asn-45 contacts ATP. 2 residues coordinate Mg(2+): Arg-375 and Arg-405. One can recognise a PLD phosphodiesterase domain in the interval Pro-430–Thr-464. His-435 serves as the catalytic Phosphohistidine intermediate. Residues Tyr-468, Arg-564, and His-592 each contribute to the ATP site.

This sequence belongs to the polyphosphate kinase 1 (PPK1) family. Requires Mg(2+) as cofactor. Post-translationally, an intermediate of this reaction is the autophosphorylated ppk in which a phosphate is covalently linked to a histidine residue through a N-P bond.

It carries out the reaction [phosphate](n) + ATP = [phosphate](n+1) + ADP. Catalyzes the reversible transfer of the terminal phosphate of ATP to form a long-chain polyphosphate (polyP). The protein is Polyphosphate kinase of Escherichia coli O6:H1 (strain CFT073 / ATCC 700928 / UPEC).